Reading from the N-terminus, the 217-residue chain is NADPH-dependent 3-demethoxyubiquinone 3-hydroxylase, mitochondrial (217 aa).

2 repeat units span residues 49–130 and 131–217. Residues 49-217 form a 2 X approximate tandem repeats region; it reads IIERIIRVDH…KTAIWLSTRV (169 aa). Arginine 52 contributes to the NADH binding site. Fe cation-binding residues include glutamate 61, glutamate 91, histidine 94, glutamate 143, glutamate 178, and histidine 181. Residue arginine 216 coordinates NADH.

This sequence belongs to the COQ7 family. In terms of assembly, component of a multi-subunit COQ enzyme complex. Requires Fe cation as cofactor.

Its subcellular location is the mitochondrion inner membrane. It catalyses the reaction a 5-methoxy-2-methyl-3-(all-trans-polyprenyl)benzoquinone + NADH + O2 = a 3-demethylubiquinone + NAD(+) + H2O. Its pathway is cofactor biosynthesis; ubiquinone biosynthesis. Catalyzes the hydroxylation of the 5-methoxy-2-methyl-3-(all-trans-polyprenyl)benzoquinone at the C6 position and participates in the biosynthesis of ubiquinone. Catalyzes the reaction through a substrate-mediated reduction pathway, whereby NADH shuttles electrons to 5-methoxy-2-methyl-3-(all-trans-decaprenyl)benzoquinone, which then transfers the electrons to the two Fe(3+) centers. The binding of 5-methoxy-2-methyl-3-(all-trans-polyprenyl)benzoquinone (DMQn) mediates reduction of the diiron center by nicotinamide adenine dinucleotide (NADH) and initiates oxygen activation for subsequent DMQ hydroxylation. Also has a structural role in the COQ enzyme complex, stabilizing other COQ polypeptides. This chain is NADPH-dependent 3-demethoxyubiquinone 3-hydroxylase, mitochondrial, found in Dictyostelium discoideum (Social amoeba).